Consider the following 394-residue polypeptide: Large ribosomal subunit protein mL44 (394 aa).

The transit peptide at 1-21 directs the protein to the mitochondrion; that stretch reads MFRHVAQNLGSRNTSIQSYRL.

Belongs to the ribonuclease III family. Mitochondrion-specific ribosomal protein mL44 subfamily. In terms of assembly, component of the mitochondrial large ribosomal subunit (mt-LSU).

It is found in the mitochondrion. Component of the mitochondrial ribosome. May have a function in the assembly/stability of nascent mitochondrial polypeptides exiting the ribosome. This chain is Large ribosomal subunit protein mL44, found in Caenorhabditis elegans.